A 339-amino-acid chain; its full sequence is Ornithine utilization regulator (339 aa).

Residues 241–338 (TRVRRLLLAR…GKLPSDYREA (98 aa)) enclose the HTH araC/xylS-type domain. 2 consecutive DNA-binding regions (H-T-H motif) follow at residues 258–279 (EQAA…SSLG) and 305–328 (LYEI…RKWT).

Its function is as follows. Probably activates the ArgJ gene that encodes ornithine acetyltransferase. Binds to its own promoter-operator region. Probably binds ornithine. The chain is Ornithine utilization regulator (oruR) from Pseudomonas aeruginosa (strain ATCC 15692 / DSM 22644 / CIP 104116 / JCM 14847 / LMG 12228 / 1C / PRS 101 / PAO1).